The primary structure comprises 343 residues: Tribbles homolog 2 (343 aa).

A disordered region spans residues 25-50 (EELSSIRSAEPSQSFSPNLGSPSPPE). Over residues 29 to 45 (SIRSAEPSQSFSPNLGS) the composition is skewed to polar residues. Residues 61–308 (IGKYLLLEPL…SQEILDHPWF (248 aa)) form the Protein kinase domain.

This sequence belongs to the protein kinase superfamily. CAMK Ser/Thr protein kinase family. Tribbles subfamily. Highly expressed in the thyroid, also present in ovary and cerebrum.

It localises to the cytoplasm. It is found in the cytoskeleton. In terms of biological role, interacts with MAPK kinases and regulates activation of MAP kinases. Does not display kinase activity. The chain is Tribbles homolog 2 from Canis lupus familiaris (Dog).